Consider the following 646-residue polypeptide: Heat shock 70 kDa protein (646 aa).

Over residues 613–632 (GGAPGGMPGAAPGGFPGGAP) the composition is skewed to gly residues. The interval 613-646 (GGAPGGMPGAAPGGFPGGAPGSNDNEGPTVEEVD) is disordered.

The protein belongs to the heat shock protein 70 family.

The polypeptide is Heat shock 70 kDa protein (hsps-1) (Neurospora crassa (strain ATCC 24698 / 74-OR23-1A / CBS 708.71 / DSM 1257 / FGSC 987)).